A 332-amino-acid polypeptide reads, in one-letter code: Ferredoxin--NADP reductase 2 (332 aa).

FAD-binding residues include E37, Q45, Y50, V90, F124, D285, and T326.

The protein belongs to the ferredoxin--NADP reductase type 2 family. Homodimer. FAD is required as a cofactor.

It catalyses the reaction 2 reduced [2Fe-2S]-[ferredoxin] + NADP(+) + H(+) = 2 oxidized [2Fe-2S]-[ferredoxin] + NADPH. This is Ferredoxin--NADP reductase 2 from Bacillus pumilus (strain SAFR-032).